The sequence spans 320 residues: Nicotianamine synthase 2 (320 aa).

It belongs to the nicotianamine synthase (NAS)-like family.

It catalyses the reaction 3 S-adenosyl-L-methionine = nicotianamine + 3 S-methyl-5'-thioadenosine + 3 H(+). Its function is as follows. Synthesizes nicotianamine, a polyamine which serves as a sensor for the physiological iron status within the plant, and/or might be involved in the transport of iron. The protein is Nicotianamine synthase 2 (NAS2) of Arabidopsis thaliana (Mouse-ear cress).